We begin with the raw amino-acid sequence, 190 residues long: Peptidyl-tRNA hydrolase (190 aa).

Tyr-14 lines the tRNA pocket. Residue His-19 is the Proton acceptor of the active site. Residues Tyr-64, Asn-66, and Asn-112 each coordinate tRNA.

Belongs to the PTH family. As to quaternary structure, monomer.

Its subcellular location is the cytoplasm. It carries out the reaction an N-acyl-L-alpha-aminoacyl-tRNA + H2O = an N-acyl-L-amino acid + a tRNA + H(+). Functionally, hydrolyzes ribosome-free peptidyl-tRNAs (with 1 or more amino acids incorporated), which drop off the ribosome during protein synthesis, or as a result of ribosome stalling. In terms of biological role, catalyzes the release of premature peptidyl moieties from peptidyl-tRNA molecules trapped in stalled 50S ribosomal subunits, and thus maintains levels of free tRNAs and 50S ribosomes. The chain is Peptidyl-tRNA hydrolase from Pelodictyon phaeoclathratiforme (strain DSM 5477 / BU-1).